The sequence spans 430 residues: Citrate synthase (430 aa).

Catalysis depends on residues His305 and Asp363.

The protein belongs to the citrate synthase family. As to quaternary structure, homohexamer.

It catalyses the reaction oxaloacetate + acetyl-CoA + H2O = citrate + CoA + H(+). It functions in the pathway carbohydrate metabolism; tricarboxylic acid cycle; isocitrate from oxaloacetate: step 1/2. Its activity is regulated as follows. Allosterically inhibited by NADH. The polypeptide is Citrate synthase (gltA) (Coxiella burnetii (strain RSA 493 / Nine Mile phase I)).